Consider the following 671-residue polypeptide: NADPH--cytochrome P450 reductase (671 aa).

Residues 1 to 14 lie on the Lumenal side of the membrane; sequence MSAEHVEEVVSEEP. The helical transmembrane segment at 15–35 threads the bilayer; sequence FLGTLDIALLVVLLVGATWYF. The Cytoplasmic portion of the chain corresponds to 36-671; it reads MRSRKKEEAP…QKRYSADVWS (636 aa). Residues 77 to 221 enclose the Flavodoxin-like domain; sequence LVVFYGSQTG…DFITWKDRFW (145 aa). FMN-binding positions include 83–88, 135–138, 170–179, and aspartate 205; these read SQTGTA, ATYG, and LGNKTYEHYN. Residues 276-515 enclose the FAD-binding FR-type domain; the sequence is KNPFLASVIV…FIRKSQFRLP (240 aa). Arginine 295 serves as a coordination point for NADP(+). FAD is bound by residues 451-454, 469-471, tyrosine 475, and 485-488; these read RYYS, TAV, and GVAT. NADP(+) is bound by residues threonine 529, 589 to 590, 595 to 599, and aspartate 632; these read SR and KIYVT. Residue tryptophan 670 participates in FAD binding.

Belongs to the NADPH--cytochrome P450 reductase family. This sequence in the N-terminal section; belongs to the flavodoxin family. It in the C-terminal section; belongs to the flavoprotein pyridine nucleotide cytochrome reductase family. Requires FAD as cofactor. FMN serves as cofactor.

Its subcellular location is the endoplasmic reticulum membrane. It carries out the reaction 2 oxidized [cytochrome P450] + NADPH = 2 reduced [cytochrome P450] + NADP(+) + H(+). In terms of biological role, this enzyme is required for electron transfer from NADP to cytochrome P450 in microsomes. It can also provide electron transfer to heme oxygenase and cytochrome B5. This Musca domestica (House fly) protein is NADPH--cytochrome P450 reductase.